Consider the following 227-residue polypeptide: Enolase-phosphatase E1 (227 aa).

Positions 11 and 13 each coordinate Mg(2+). Substrate-binding positions include 118–119 (SS) and Lys-161. Position 186 (Asp-186) interacts with Mg(2+).

It belongs to the HAD-like hydrolase superfamily. MasA/MtnC family. In terms of assembly, monomer. The cofactor is Mg(2+).

It is found in the cytoplasm. It localises to the nucleus. It carries out the reaction 5-methylsulfanyl-2,3-dioxopentyl phosphate + H2O = 1,2-dihydroxy-5-(methylsulfanyl)pent-1-en-3-one + phosphate. Its pathway is amino-acid biosynthesis; L-methionine biosynthesis via salvage pathway; L-methionine from S-methyl-5-thio-alpha-D-ribose 1-phosphate: step 3/6. It participates in amino-acid biosynthesis; L-methionine biosynthesis via salvage pathway; L-methionine from S-methyl-5-thio-alpha-D-ribose 1-phosphate: step 4/6. Bifunctional enzyme that catalyzes the enolization of 2,3-diketo-5-methylthiopentyl-1-phosphate (DK-MTP-1-P) into the intermediate 2-hydroxy-3-keto-5-methylthiopentenyl-1-phosphate (HK-MTPenyl-1-P), which is then dephosphorylated to form the acireductone 1,2-dihydroxy-3-keto-5-methylthiopentene (DHK-MTPene). In Saccharomyces cerevisiae (strain RM11-1a) (Baker's yeast), this protein is Enolase-phosphatase E1.